The following is a 209-amino-acid chain: Outer-membrane lipoprotein carrier protein (209 aa).

The signal sequence occupies residues 1 to 21; that stretch reads MHRQLRYAVLATALFASTAFA.

The protein belongs to the LolA family. As to quaternary structure, monomer.

Its subcellular location is the periplasm. Participates in the translocation of lipoproteins from the inner membrane to the outer membrane. Only forms a complex with a lipoprotein if the residue after the N-terminal Cys is not an aspartate (The Asp acts as a targeting signal to indicate that the lipoprotein should stay in the inner membrane). The polypeptide is Outer-membrane lipoprotein carrier protein (Xanthomonas campestris pv. campestris (strain 8004)).